The sequence spans 239 residues: Probable transcriptional regulatory protein MG332 (239 aa).

Belongs to the TACO1 family.

Its subcellular location is the cytoplasm. This is Probable transcriptional regulatory protein MG332 from Mycoplasma genitalium (strain ATCC 33530 / DSM 19775 / NCTC 10195 / G37) (Mycoplasmoides genitalium).